The sequence spans 492 residues: uncharacterized protein (492 aa).

A helical transmembrane segment spans residues 30–46 (YVCLSVAVAAVGYANYM). Residues 144-210 (NYYDVLNVNE…IRKNIYDNEG (67 aa)) enclose the J domain.

It localises to the membrane. This is an uncharacterized protein from Plasmodium falciparum (isolate 3D7).